Reading from the N-terminus, the 155-residue chain is Small ribosomal subunit protein uS7 (155 aa).

The protein belongs to the universal ribosomal protein uS7 family. In terms of assembly, part of the 30S ribosomal subunit. Contacts proteins S9 and S11.

One of the primary rRNA binding proteins, it binds directly to 16S rRNA where it nucleates assembly of the head domain of the 30S subunit. Is located at the subunit interface close to the decoding center, probably blocks exit of the E-site tRNA. The polypeptide is Small ribosomal subunit protein uS7 (Chloroherpeton thalassium (strain ATCC 35110 / GB-78)).